A 729-amino-acid chain; its full sequence is U-box domain-containing protein 17 (729 aa).

Positions 304 to 378 (TVPKDFVCPI…VQWCTASGIS (75 aa)) constitute a U-box domain. ARM repeat units lie at residues 438–477 (KENR…NLSI), 479–520 (EKNK…SLSA), 523–562 (EYKK…NLST), and 564–601 (PDNC…LLVR).

The catalysed reaction is S-ubiquitinyl-[E2 ubiquitin-conjugating enzyme]-L-cysteine + [acceptor protein]-L-lysine = [E2 ubiquitin-conjugating enzyme]-L-cysteine + N(6)-ubiquitinyl-[acceptor protein]-L-lysine.. It participates in protein modification; protein ubiquitination. Its function is as follows. Functions as an E3 ubiquitin ligase. In Arabidopsis thaliana (Mouse-ear cress), this protein is U-box domain-containing protein 17 (PUB17).